The primary structure comprises 131 residues: Large ribosomal subunit protein eL32 (131 aa).

Residues 39–77 (LGEKWRRPKGRHSKMRRKLKSKPKMPNPGYGSPKKVRGL) form a disordered region. Over residues 44–61 (RRPKGRHSKMRRKLKSKP) the composition is skewed to basic residues.

Belongs to the eukaryotic ribosomal protein eL32 family.

The protein is Large ribosomal subunit protein eL32 (rpl32) of Methanopyrus kandleri (strain AV19 / DSM 6324 / JCM 9639 / NBRC 100938).